The primary structure comprises 155 residues: Ribonuclease H (155 aa).

The 143-residue stretch at 4–146 (NIDVVEIYTD…CDRLATEQIK (143 aa)) folds into the RNase H type-1 domain. D13, E51, D73, and D138 together coordinate Mg(2+).

It belongs to the RNase H family. Monomer. Mg(2+) is required as a cofactor.

It is found in the cytoplasm. It catalyses the reaction Endonucleolytic cleavage to 5'-phosphomonoester.. Its function is as follows. Endonuclease that specifically degrades the RNA of RNA-DNA hybrids. The polypeptide is Ribonuclease H (Thermoanaerobacter pseudethanolicus (strain ATCC 33223 / 39E) (Clostridium thermohydrosulfuricum)).